The chain runs to 391 residues: Putative protein PLEKHA9 (391 aa).

This Homo sapiens (Human) protein is Putative protein PLEKHA9 (PLEKHA8P1).